A 300-amino-acid polypeptide reads, in one-letter code: MDGILNINKPFGITSFDVVAKVRRIYSQKRVGHGGTLDPYATGVIPVFLGKSTRLIEYLSSVSKTYLAEIELGVETDSYDSEGEITFRKTCDYVTREMIYKTLMDFQGEIIQIPPMYSAVKHRGMRLYNLARQGIEVERIPRVATIYGIELLNYTSPVLRVRIECGHGTYIRSLAFDLGRKLGCGAYLKSLVREAYGQFNLTNSLDFADLEAAKCDGKLAGILLPLETAIGHLPRVSLDEENITRLVNGLEITLDRIDKPEAVAVYNAENSFVAIIQPETDGTWHPAKVFIRQSPKPDAN.

Residue Asp38 is the Nucleophile of the active site.

This sequence belongs to the pseudouridine synthase TruB family. Type 1 subfamily.

It carries out the reaction uridine(55) in tRNA = pseudouridine(55) in tRNA. Functionally, responsible for synthesis of pseudouridine from uracil-55 in the psi GC loop of transfer RNAs. In Dehalococcoides mccartyi (strain ATCC BAA-2100 / JCM 16839 / KCTC 5957 / BAV1), this protein is tRNA pseudouridine synthase B.